The sequence spans 74 residues: Sec-independent protein translocase protein TatA (74 aa).

A helical transmembrane segment spans residues 1-21; the sequence is MGGISIWNLVIIVLLVVLLFG. Residues 51–74 are disordered; it reads AEFEKVEQKTAESTEQKAKEKEQA.

Belongs to the TatA/E family. In terms of assembly, the Tat system comprises two distinct complexes: a TatABC complex, containing multiple copies of TatA, TatB and TatC subunits, and a separate TatA complex, containing only TatA subunits. Substrates initially bind to the TatABC complex, which probably triggers association of the separate TatA complex to form the active translocon.

It is found in the cell inner membrane. Its function is as follows. Part of the twin-arginine translocation (Tat) system that transports large folded proteins containing a characteristic twin-arginine motif in their signal peptide across membranes. TatA could form the protein-conducting channel of the Tat system. This chain is Sec-independent protein translocase protein TatA, found in Glaesserella parasuis serovar 5 (strain SH0165) (Haemophilus parasuis).